A 309-amino-acid polypeptide reads, in one-letter code: Methionyl-tRNA formyltransferase (309 aa).

107–110 is a (6S)-5,6,7,8-tetrahydrofolate binding site; the sequence is SLLP.

This sequence belongs to the Fmt family.

The enzyme catalyses L-methionyl-tRNA(fMet) + (6R)-10-formyltetrahydrofolate = N-formyl-L-methionyl-tRNA(fMet) + (6S)-5,6,7,8-tetrahydrofolate + H(+). Its function is as follows. Attaches a formyl group to the free amino group of methionyl-tRNA(fMet). The formyl group appears to play a dual role in the initiator identity of N-formylmethionyl-tRNA by promoting its recognition by IF2 and preventing the misappropriation of this tRNA by the elongation apparatus. The polypeptide is Methionyl-tRNA formyltransferase (Borrelia hermsii (strain HS1 / DAH)).